Reading from the N-terminus, the 469-residue chain is C4b-binding protein (469 aa).

The signal sequence occupies residues 1 to 56; the sequence is MCAKQQQTLLPTRAAHGRLHRNRDAVAWPFSTLCRVSGPTLFQMTFTAALWVAVFG. 6 Sushi domains span residues 57 to 117, 118 to 178, 179 to 242, 243 to 301, 302 to 357, and 358 to 415; these read KCGP…SCAK, KHCR…ECVI, VKCG…TCEK, IICS…TCEF, DCDL…QCKA, and LCQK…RCEQ. Intrachain disulfides connect cysteine 58–cysteine 103, cysteine 88–cysteine 115, cysteine 120–cysteine 160, cysteine 146–cysteine 176, cysteine 181–cysteine 223, cysteine 209–cysteine 240, cysteine 245–cysteine 287, cysteine 273–cysteine 299, cysteine 303–cysteine 343, cysteine 329–cysteine 355, cysteine 359–cysteine 400, and cysteine 386–cysteine 413. An N-linked (GlcNAc...) asparagine glycan is attached at asparagine 74. Residues asparagine 227, asparagine 275, and asparagine 292 are each glycosylated (N-linked (GlcNAc...) asparagine). N-linked (GlcNAc...) asparagine glycosylation is found at asparagine 366 and asparagine 381. N-linked (GlcNAc...) asparagine glycosylation is present at asparagine 428.

As to quaternary structure, homoheptamer; not covalently linked. Mouse lacks the beta chain of C4BP.

The protein resides in the secreted. Controls the classical pathway of complement activation. It binds as a cofactor to C3b/C4b inactivator (C3bINA), which then hydrolyzes the complement fragment C4b. It also accelerates the degradation of the C4bC2a complex (C3 convertase) by dissociating the complement fragment C2a. Alpha chain binds C4b. It also interacts with serum amyloid P component. This chain is C4b-binding protein (C4bpa), found in Mus musculus (Mouse).